The following is a 1431-amino-acid chain: Stabilin-2 (1431 aa).

The Extracellular segment spans residues 1 to 1322; sequence SLPSLLTRLE…PPTAATAAHS (1322 aa). Residues 2–130 enclose the FAS1 domain; sequence LPSLLTRLEQ…GVIHGLEKVL (129 aa). 2 N-linked (GlcNAc...) asparagine glycosylation sites follow: Asn112 and Asn140. A Laminin EGF-like 1 domain is found at 207 to 272; that stretch reads PQCQACPGRG…CSCVHGRCSQ (66 aa). 18 cysteine pairs are disulfide-bonded: Cys212–Cys226, Cys220–Cys236, Cys238–Cys247, Cys259–Cys270, Cys263–Cys280, Cys282–Cys291, Cys300–Cys310, Cys304–Cys320, Cys322–Cys333, Cys339–Cys352, Cys346–Cys362, Cys364–Cys375, Cys381–Cys394, Cys388–Cys404, Cys406–Cys417, Cys423–Cys436, Cys430–Cys446, and Cys448–Cys459. N-linked (GlcNAc...) asparagine glycosylation is found at Asn231 and Asn243. EGF-like domains lie at 296–334, 335–376, 377–418, and 419–460; these read TTDN…TVCT, AINA…IVCL, EINP…KVCS, and LINV…IVCR. Residue Asn301 is glycosylated (N-linked (GlcNAc...) asparagine). The N-linked (GlcNAc...) asparagine glycan is linked to Asn329. Asn437 carries an N-linked (GlcNAc...) asparagine glycan. FAS1 domains follow at residues 460 to 588 and 604 to 745; these read RGSI…DKLL and VLQN…DCLL. Asn607 carries an N-linked (GlcNAc...) asparagine glycan. The region spanning 822 to 887 is the Laminin EGF-like 2 domain; that stretch reads PDCQACPGGP…SCSEHGQCDE (66 aa). 6 disulfides stabilise this stretch: Cys827/Cys841, Cys835/Cys851, Cys853/Cys862, Cys874/Cys885, Cys879/Cys895, and Cys897/Cys906. N-linked (GlcNAc...) asparagine glycosylation is present at Asn858. Asn929 carries an N-linked (GlcNAc...) asparagine glycan. EGF-like domains are found at residues 947–987 and 988–1030; these read VVDF…YSCI and EIDP…VDCE. 8 cysteine pairs are disulfide-bonded: Cys951/Cys964, Cys958/Cys973, Cys975/Cys986, Cys992/Cys1006, Cys1000/Cys1016, Cys1018/Cys1029, Cys1085/Cys1154, and Cys1109/Cys1130. Residues 1063 to 1156 form the Link domain; the sequence is GVFHLRSPLG…SEMWDVFCYR (94 aa). 5 N-linked (GlcNAc...) asparagine glycosylation sites follow: Asn1145, Asn1161, Asn1233, Asn1249, and Asn1258. Positions 1176–1310 constitute an FAS1 4 domain; that stretch reads SGNLLQVLMS…GILHIISEPL (135 aa). A helical membrane pass occupies residues 1323–1343; sequence GLGTGIFCAVVLVTGAIALAA. The Cytoplasmic segment spans residues 1344–1431; that stretch reads YSYFRLKQRT…QQATTVTVPR (88 aa). Residues 1368 to 1378 form an interaction with TMSB4X region; it reads WLLASSSPRIS.

In terms of assembly, interacts with GULP1, heparin, alpha-M/beta-2 integrin (ITGAM and ITGB2), and thymosin beta 4 (TMSB4X). Glycosylated. Post-translationally, proteolytically processed to yield a 175 kDa protein. As to expression, initially expressed in all vascular cells, including those of sinusoidal-like structures, vitellin veins, and hepatic veins or sinus venosus, in E13.5 fetal liver. The expression then progressively disappears in the portal and hepatic veins, but the expression in sinusoidals endothelial cells (SECs) is retained and becomes stronger during development.

Its subcellular location is the cytoplasm. It localises to the cell membrane. Phosphatidylserine receptor that enhances the engulfment of apoptotic cells. Hyaluronan receptor that binds to and mediates endocytosis of hyaluronic acid (HA). Also acts, in different species, as a primary systemic scavenger receptor for heparin (Hep), chondroitin sulfate (CS), dermatan sulfate (DS), nonglycosaminoglycan (GAG), acetylated low-density lipoprotein (AcLDL), pro-collagen propeptides and advanced glycation end products (AGE). May serve to maintain tissue integrity by supporting extracellular matrix turnover or it may contribute to maintaining fluidity of bodily liquids by resorption of hyaluronan. Counter receptor which plays an important role in lymphocyte recruitment in the hepatic vasculature. Binds to both Gram-positive and Gram-negative bacteria and may play a role in defense against bacterial infection. The proteolytically processed 175 kDa form also functions as an endocytosis receptor for heparin internalization as well as HA and CS. In Rattus norvegicus (Rat), this protein is Stabilin-2.